The sequence spans 242 residues: uncharacterized protein (242 aa).

This is an uncharacterized protein from Acanthamoeba polyphaga mimivirus (APMV).